Reading from the N-terminus, the 310-residue chain is MRSDVSEIEKETKCPECGSDDLRGDYERAEIVCGKCGLVIDDNLVDMGPEWRAFDHEQRDKRTRVGAPITYTIHDKGLSTMIDWRNKDIYGRDIPARNRAQWYRLRKWQRKIRISGATERNLAFALSELDRDSSRLGLPRSVREAASMVYRRAVENKLIRGRSIEGVVAASLYAACRKCNVPRTLDEIAEVSRVSKKEVGRTYRFLTRELNIKLPPTSPVDYVPRFASELGLSGEVQSKAIEIIEMAMENGLTSGRGPTGVAAAALYIASVLLGEHKTQRDVAEVAGVTEVTIRNRYKELTEQLDLGVTL.

The TFIIB-type zinc finger occupies 9-41 (EKETKCPECGSDDLRGDYERAEIVCGKCGLVID). Residues Cys14, Cys17, Cys33, and Cys36 each contribute to the Zn(2+) site. Repeat copies occupy residues 127–210 (SELD…TREL) and 221–302 (DYVP…ELTE).

The protein belongs to the TFIIB family.

Stabilizes TBP binding to an archaeal box-A promoter. Also responsible for recruiting RNA polymerase II to the pre-initiation complex (DNA-TBP-TFIIB). The sequence is that of Transcription initiation factor IIB from Methanothermobacter thermautotrophicus (strain ATCC 29096 / DSM 1053 / JCM 10044 / NBRC 100330 / Delta H) (Methanobacterium thermoautotrophicum).